The following is a 329-amino-acid chain: GTP 3',8-cyclase (329 aa).

The 227-residue stretch at 8-234 folds into the Radical SAM core domain; that stretch reads AFARKFYYLR…QLRQRSDGPA (227 aa). A GTP-binding site is contributed by arginine 17. [4Fe-4S] cluster contacts are provided by cysteine 24 and cysteine 28. S-adenosyl-L-methionine is bound at residue tyrosine 30. A [4Fe-4S] cluster-binding site is contributed by cysteine 31. Arginine 68 lines the GTP pocket. S-adenosyl-L-methionine is bound at residue glycine 72. Threonine 99 provides a ligand contact to GTP. Serine 123 serves as a coordination point for S-adenosyl-L-methionine. Lysine 160 provides a ligand contact to GTP. Methionine 194 serves as a coordination point for S-adenosyl-L-methionine. Residues cysteine 257 and cysteine 260 each contribute to the [4Fe-4S] cluster site. 262–264 is a binding site for GTP; that stretch reads RLR. A [4Fe-4S] cluster-binding site is contributed by cysteine 274.

The protein belongs to the radical SAM superfamily. MoaA family. Monomer and homodimer. [4Fe-4S] cluster serves as cofactor.

The enzyme catalyses GTP + AH2 + S-adenosyl-L-methionine = (8S)-3',8-cyclo-7,8-dihydroguanosine 5'-triphosphate + 5'-deoxyadenosine + L-methionine + A + H(+). It functions in the pathway cofactor biosynthesis; molybdopterin biosynthesis. In terms of biological role, catalyzes the cyclization of GTP to (8S)-3',8-cyclo-7,8-dihydroguanosine 5'-triphosphate. This Shigella boydii serotype 18 (strain CDC 3083-94 / BS512) protein is GTP 3',8-cyclase.